A 391-amino-acid polypeptide reads, in one-letter code: Glutamate 5-kinase (391 aa).

Position 17 (K17) interacts with ATP. Substrate is bound by residues S57, D144, and N156. ATP-binding positions include S176–D177 and T216–K222. The 79-residue stretch at Q278–A356 folds into the PUA domain. The segment at S370 to S391 is disordered. Residues S378–S391 are compositionally biased toward polar residues.

The protein belongs to the glutamate 5-kinase family.

It localises to the cytoplasm. The catalysed reaction is L-glutamate + ATP = L-glutamyl 5-phosphate + ADP. The protein operates within amino-acid biosynthesis; L-proline biosynthesis; L-glutamate 5-semialdehyde from L-glutamate: step 1/2. Catalyzes the transfer of a phosphate group to glutamate to form L-glutamate 5-phosphate. In Cutibacterium acnes (strain DSM 16379 / KPA171202) (Propionibacterium acnes), this protein is Glutamate 5-kinase.